The sequence spans 510 residues: NAD(P)H-quinone oxidoreductase subunit 2 A, chloroplastic (510 aa).

13 helical membrane passes run 24-44 (LLLFHGSFIFPECILIFGLIL), 57-77 (IPWLYFISSTSLVMSITALLF), 99-119 (IFQFLILLCSTLCIPLSVEYI), 124-144 (MAITEFLLFVLTATLGGMFLC), 149-169 (LITIFVAPECFSLCSYLLSGY), 183-203 (YLLMGGASSSILVHGFSWLYG), 227-247 (PGISIALIFITVGIGFKLSPA), 295-315 (WHLLLEILAILSMILGNLIAI), 323-343 (MLAYSSIGQIGYVIIGIIVGD), 347-367 (GYASMITYMLFYISMNLGTFA), 395-415 (ALSSALCLLSLGGLPPLAGFF), 418-438 (LHLFWCGWQAGLYFLVSIGLL), and 484-504 (MIVCVIASTIPGISMNPIIAI).

This sequence belongs to the complex I subunit 2 family. In terms of assembly, NDH is composed of at least 16 different subunits, 5 of which are encoded in the nucleus.

The protein localises to the plastid. The protein resides in the chloroplast thylakoid membrane. The enzyme catalyses a plastoquinone + NADH + (n+1) H(+)(in) = a plastoquinol + NAD(+) + n H(+)(out). The catalysed reaction is a plastoquinone + NADPH + (n+1) H(+)(in) = a plastoquinol + NADP(+) + n H(+)(out). Functionally, NDH shuttles electrons from NAD(P)H:plastoquinone, via FMN and iron-sulfur (Fe-S) centers, to quinones in the photosynthetic chain and possibly in a chloroplast respiratory chain. The immediate electron acceptor for the enzyme in this species is believed to be plastoquinone. Couples the redox reaction to proton translocation, and thus conserves the redox energy in a proton gradient. This Platanus occidentalis (Sycamore) protein is NAD(P)H-quinone oxidoreductase subunit 2 A, chloroplastic.